The sequence spans 188 residues: Apolipoprotein M (188 aa).

A signal peptide (not cleaved) is located at residues 1-22; the sequence is MFHQIWAALLYFYGIILNSIYQ. Cystine bridges form between Cys-23-Cys-167, Cys-95-Cys-183, and Cys-128-Cys-157. N-linked (GlcNAc...) asparagine glycosylation occurs at Asn-135. Residues Glu-136 and Arg-143 each contribute to the tetradecanoate site.

It belongs to the calycin superfamily. Lipocalin family. Highly divergent. As to quaternary structure, interacts with LRP2; LRP2 mediates APOM renal uptake and subsequent lysosomal degradation. As to expression, plasma protein. Expressed in liver and kidney.

It localises to the secreted. Its function is as follows. Probably involved in lipid transport. Can bind sphingosine-1-phosphate, myristic acid, palmitic acid and stearic acid, retinol, all-trans-retinoic acid and 9-cis-retinoic acid. This chain is Apolipoprotein M (APOM), found in Homo sapiens (Human).